The chain runs to 35 residues: Conotoxin M11.2 (35 aa).

Intrachain disulfides connect Cys2-Cys16, Cys9-Cys21, Cys15-Cys26, and Cys20-Cys33.

The protein belongs to the conotoxin I1 superfamily. As to expression, expressed by the venom duct.

Its subcellular location is the secreted. The chain is Conotoxin M11.2 from Conus magus (Magical cone).